A 466-amino-acid polypeptide reads, in one-letter code: MASEGDKLMGGRFVGSTDPIMQMLSTSMSTEQRLSEVDIQASIAYAKALEKAGILTKTELEKILSGLEKISEEWSKGVFVVTQSDEDIHTANERRLKELIGDIAGKLNTGRSRNEQVVTDLKLFMKNSLSVISTHLLQLIKTLVERAAIEIDVILPGYTHLQKAQPIRWSQFLLSHAVALTRDSERLGEVKRRINVLPLGSGALAGNPLDIDREMLRSELDFASISLNSMDAISERDFVVEFLSVATLLMIHLSKMAEDLIIYSTSEFGFLTLSDAFSTGSSLMPQKKNPDSLELIRSKAGRVFGRLASILMVLKGLPSTYNKDLQEDKEAVFDVVDTLTAVLQVATGVISTLQISKENMEKALTPEMLSTDLALYLVRKGMPFRQAHTASGKAVHLAETKGITINNLTLEDLKSISPLFSSDVSQVFNFVNSVEQYTAMGGTAKSSVTTQIEHLRELMKKQKEQA.

Residues Ser-27, Asn-114, and Thr-159 each coordinate 2-(N(omega)-L-arginino)succinate. The active-site Proton acceptor is His-160. The active-site Proton donor is the Ser-281. 4 residues coordinate 2-(N(omega)-L-arginino)succinate: Asn-289, Tyr-321, Gln-326, and Lys-329.

The protein belongs to the lyase 1 family. Argininosuccinate lyase subfamily. Homotetramer. Eye lens.

The catalysed reaction is 2-(N(omega)-L-arginino)succinate = fumarate + L-arginine. Its pathway is amino-acid biosynthesis; L-arginine biosynthesis; L-arginine from L-ornithine and carbamoyl phosphate: step 3/3. Delta crystallin, the principal crystallin in embryonic lens, is found only in birds and reptiles. This protein also functions as an enzymatically active argininosuccinate lyase. The sequence is that of Argininosuccinate lyase (ASL) from Anser anser anser (Western greylag goose).